The primary structure comprises 475 residues: MAGRPHPYDGNSSDPENWDRKLHSRPRKLYKHSSTSSRIAKGGVDHTKMSLHGASGGHERSRDRRRSSDRSRDSSHERTESQLTPCIRNVTSPTRQHHVEREKDHSSSRPSSPRPQKASPNGSISSAGNSSRNSSQSSSDGSCKTAGEMVFVYENAKEGARNIRTSERVTLIVDNTRFVVDPSIFTAQPNTMLGRMFGSGREHNFTRPNEKGEYEVAEGIGSTVFRAILDYYKTGIIRCPDGISIPELREACDYLCISFEYSTIKCRDLSALMHELSNDGARRQFEFYLEEMILPLMVASAQSGERECHIVVLTDDDVVDWDEEYPPQMGEEYSQIIYSTKLYRFFKYIENRDVAKSVLKERGLKKIRLGIEGYPTYKEKVKKRPGGRPEVIYNYVQRPFIRMSWEKEEGKSRHVDFQCVKSKSITNLAAAAADIPQDQLVVMHPTPQVDELDILPIHPPSGNSDLDPDAQNPTL.

Residues 1 to 143 are disordered; sequence MAGRPHPYDG…SSQSSSDGSC (143 aa). The segment covering 22–31 has biased composition (basic residues); the sequence is LHSRPRKLYK. Positions 57–80 are enriched in basic and acidic residues; sequence GHERSRDRRRSSDRSRDSSHERTE. Residues 81 to 94 are compositionally biased toward polar residues; the sequence is SQLTPCIRNVTSPT. Over residues 97-107 the composition is skewed to basic and acidic residues; the sequence is HHVEREKDHSS. Residues 108–142 are compositionally biased toward low complexity; the sequence is SRPSSPRPQKASPNGSISSAGNSSRNSSQSSSDGS. The segment at 146-475 is interaction with AKT family members; the sequence is AGEMVFVYEN…LDPDAQNPTL (330 aa). In terms of domain architecture, BTB spans 167-241; that stretch reads ERVTLIVDNT…YKTGIIRCPD (75 aa). A disordered region spans residues 456–475; it reads PIHPPSGNSDLDPDAQNPTL.

As to quaternary structure, interacts (via C-terminal 330-amino-acid region) with AKT1; AKT2 and AKT3. Interacts with PPP2CA and PPP1CA.

It is found in the nucleus. It localises to the cytoplasm. Plays a major role as an activator of AKT family members by inhibiting PPP2CA-mediated dephosphorylation, thereby keeping AKTs activated. Plays a role in preventing motor neuronal death and in accelerating the growth of pancreatic beta cells. This Pongo abelii (Sumatran orangutan) protein is BTB/POZ domain-containing protein 10 (BTBD10).